Consider the following 182-residue polypeptide: UPF0690 protein C1orf52 (182 aa).

Disordered stretches follow at residues 1-67 and 100-182; these read MAAE…RSVT and WKSN…KKKK. Acidic residues predominate over residues 23–32; it reads SDEEDNIEPE. The span at 50-63 shows a compositional bias: basic and acidic residues; that stretch reads NKAEKRLPGPDELF. Threonine 67 carries the post-translational modification Phosphothreonine. Phosphotyrosine is present on tyrosine 132. A compositionally biased stretch (acidic residues) spans 151–162; that stretch reads EGEETLESDDEK. Residue serine 158 is modified to Phosphoserine. Basic and acidic residues predominate over residues 172 to 182; the sequence is VEPGEPAKKKK.

This sequence belongs to the UPF0690 family. Expressed in all tissues tested including heart, placenta, liver, skeletal muscle, kidney and pancreas. Weak expression in brain and lung.

This Homo sapiens (Human) protein is UPF0690 protein C1orf52 (C1orf52).